The primary structure comprises 83 residues: ATP synthase subunit c (83 aa).

The next 2 helical transmembrane spans lie at 9 to 29 (LICVGAALSIGLAGLGAGIGI) and 51 to 71 (MVFMILGMALAESIAIYGLVI).

This sequence belongs to the ATPase C chain family. F-type ATPases have 2 components, F(1) - the catalytic core - and F(0) - the membrane proton channel. F(1) has five subunits: alpha(3), beta(3), gamma(1), delta(1), epsilon(1). F(0) has three main subunits: a(1), b(2) and c(10-14). The alpha and beta chains form an alternating ring which encloses part of the gamma chain. F(1) is attached to F(0) by a central stalk formed by the gamma and epsilon chains, while a peripheral stalk is formed by the delta and b chains.

It is found in the cell inner membrane. Functionally, f(1)F(0) ATP synthase produces ATP from ADP in the presence of a proton or sodium gradient. F-type ATPases consist of two structural domains, F(1) containing the extramembraneous catalytic core and F(0) containing the membrane proton channel, linked together by a central stalk and a peripheral stalk. During catalysis, ATP synthesis in the catalytic domain of F(1) is coupled via a rotary mechanism of the central stalk subunits to proton translocation. In terms of biological role, key component of the F(0) channel; it plays a direct role in translocation across the membrane. A homomeric c-ring of between 10-14 subunits forms the central stalk rotor element with the F(1) delta and epsilon subunits. In Desulfotalea psychrophila (strain LSv54 / DSM 12343), this protein is ATP synthase subunit c.